The primary structure comprises 62 residues: Large ribosomal subunit protein uL30 (62 aa).

The protein belongs to the universal ribosomal protein uL30 family. In terms of assembly, part of the 50S ribosomal subunit.

In Dinoroseobacter shibae (strain DSM 16493 / NCIMB 14021 / DFL 12), this protein is Large ribosomal subunit protein uL30.